A 180-amino-acid polypeptide reads, in one-letter code: Telokin-like protein 20 (180 aa).

Residues 112–180 (SKTDAAVHTS…KQKLDNAKQD (69 aa)) form a disordered region. Residues 156–165 (DFEENIDDGD) are compositionally biased toward acidic residues.

The protein is Telokin-like protein 20 (TLP20) of Lepidoptera (butterflies and moths).